Here is a 182-residue protein sequence, read N- to C-terminus: UPF0301 protein NMB1336 (182 aa).

This sequence belongs to the UPF0301 (AlgH) family.

The sequence is that of UPF0301 protein NMB1336 from Neisseria meningitidis serogroup B (strain ATCC BAA-335 / MC58).